The chain runs to 967 residues: Isoleucine--tRNA ligase 2 (967 aa).

Positions proline 58–histidine 68 match the 'HIGH' region motif. The tract at residues glutamate 430–valine 463 is disordered. Residue glutamate 598 coordinates L-isoleucyl-5'-AMP. Positions lysine 639 to serine 643 match the 'KMSKS' region motif. Residue lysine 642 coordinates ATP. Residues cysteine 922, cysteine 925, cysteine 942, and cysteine 945 each contribute to the Zn(2+) site.

This sequence belongs to the class-I aminoacyl-tRNA synthetase family. IleS type 1 subfamily. In terms of assembly, monomer. Zn(2+) is required as a cofactor.

Its subcellular location is the cytoplasm. It catalyses the reaction tRNA(Ile) + L-isoleucine + ATP = L-isoleucyl-tRNA(Ile) + AMP + diphosphate. In terms of biological role, catalyzes the attachment of isoleucine to tRNA(Ile). As IleRS can inadvertently accommodate and process structurally similar amino acids such as valine, to avoid such errors it has two additional distinct tRNA(Ile)-dependent editing activities. One activity is designated as 'pretransfer' editing and involves the hydrolysis of activated Val-AMP. The other activity is designated 'posttransfer' editing and involves deacylation of mischarged Val-tRNA(Ile). The polypeptide is Isoleucine--tRNA ligase 2 (Burkholderia pseudomallei (strain K96243)).